A 181-amino-acid chain; its full sequence is LEM domain-containing protein 1 (181 aa).

The LEM domain occupies 1 to 45; the sequence is MVDVKCLSDCKLQNQLEKLGFSPGPILPSTRKLYEKKLVQLLVSP. A helical; Signal-anchor for type II membrane protein transmembrane segment spans residues 152 to 172; it reads FPVGLKLAVLGIFIIVVFVYL.

As to expression, testis-specific. Isoform 6 is detected in 17 of 18 colon cancer tissues examined.

The protein localises to the membrane. This chain is LEM domain-containing protein 1 (LEMD1), found in Homo sapiens (Human).